Consider the following 188-residue polypeptide: Elongation factor P (188 aa).

K34 carries the post-translational modification N6-(3,6-diaminohexanoyl)-5-hydroxylysine.

The protein belongs to the elongation factor P family. In terms of processing, may be beta-lysylated on the epsilon-amino group of Lys-34 by the combined action of EpmA and EpmB, and then hydroxylated on the C5 position of the same residue by EpmC (if this protein is present). Lysylation is critical for the stimulatory effect of EF-P on peptide-bond formation. The lysylation moiety may extend toward the peptidyltransferase center and stabilize the terminal 3-CCA end of the tRNA. Hydroxylation of the C5 position on Lys-34 may allow additional potential stabilizing hydrogen-bond interactions with the P-tRNA.

It localises to the cytoplasm. Its pathway is protein biosynthesis; polypeptide chain elongation. Involved in peptide bond synthesis. Alleviates ribosome stalling that occurs when 3 or more consecutive Pro residues or the sequence PPG is present in a protein, possibly by augmenting the peptidyl transferase activity of the ribosome. Modification of Lys-34 is required for alleviation. This chain is Elongation factor P, found in Pectobacterium atrosepticum (strain SCRI 1043 / ATCC BAA-672) (Erwinia carotovora subsp. atroseptica).